A 371-amino-acid chain; its full sequence is MPHHYILTLFGLLPVATNISTWWNFGSMLLTCLALQVLTGFFLAVHYTANINLAFSSIIHITRDVPYGWMMQNLHAIGASMFFICIYIHIARGLYYGSYLNKETWMSGITLLITLMATAFFGYVLPWGQMSFWAATVITNLLTAVPYLGTSLTTWLWGGFAINDPTLTRFFALHFILPFAIISLSSLHVILLHEEGSSNPLGTNPDIDKIPFHPYHSYKDFLLLTLMVLSLFIIVSFFPDIFNDPDNFSKANPLVTPQHIKPEWYFLFAYGILRSIPNQLGGALALVMSIMILFTIPFTHTANLRPMTFRPLYQLMFWTLVSTFITITWAATKPVEPPFITISQVTSTLYFTFFISIPFLGWMENKMMHLN.

Helical transmembrane passes span 25 to 45, 69 to 90, 105 to 125, and 170 to 190; these read FGSM…FLAV, WMMQ…YIHI, WMSG…GYVL, and FFAL…LHVI. Heme b-binding residues include H75 and H89. Heme b is bound by residues H174 and H188. H193 contacts a ubiquinone. The next 4 helical transmembrane spans lie at 218–238, 280–300, 312–332, and 339–358; these read YKDF…VSFF, LGGA…PFTH, LYQL…WAAT, and FITI…ISIP.

This sequence belongs to the cytochrome b family. The cytochrome bc1 complex contains 3 respiratory subunits (MT-CYB, CYC1 and UQCRFS1), 2 core proteins (UQCRC1 and UQCRC2) and probably 6 low-molecular weight proteins. It depends on heme b as a cofactor.

The protein localises to the mitochondrion inner membrane. In terms of biological role, component of the ubiquinol-cytochrome c reductase complex (complex III or cytochrome b-c1 complex) that is part of the mitochondrial respiratory chain. The b-c1 complex mediates electron transfer from ubiquinol to cytochrome c. Contributes to the generation of a proton gradient across the mitochondrial membrane that is then used for ATP synthesis. The chain is Cytochrome b (MT-CYB) from Malayopython reticulatus (Reticulate python).